The primary structure comprises 318 residues: Strigolactone esterase D14 (318 aa).

The span at 1-11 shows a compositional bias: pro residues; sequence MLRSTHPPPSS. The interval 1–48 is disordered; that stretch reads MLRSTHPPPSSPSSSSSGGGGGGGSSASSSSEKTMVGGGGGGGGGSGS. The span at 36-47 shows a compositional bias: gly residues; it reads VGGGGGGGGGSG. Residue serine 147 is the Nucleophile of the active site. Substrate is bound by residues serine 147 and cysteine 241. Catalysis depends on residues aspartate 268 and histidine 297. Histidine 297 serves as a coordination point for substrate.

Belongs to the AB hydrolase superfamily. In terms of assembly, interacts with D53. The interaction between D53 and D14 is enhanced in the presence of strigolactones. The interaction with D53 occurs in the presence of (2'R) stereoisomers of strigolactones, but not (2'S) stereoisomers. Interacts with SLR1 in a strigolactone-dependent manner. Interacts with D3 in a strigolactone-dependent manner. Expressed in the parenchyma cells of the root stele and lateral roots, vascular tissues of vein and leaf sheath, ligule base, auricle base and stem base.

It localises to the cytoplasm. The protein resides in the nucleus. Functionally, involved in strigolactone (SL) signaling pathway. May function downstream of SL synthesis, as a component of hormone signaling or as an enzyme that participates in the conversion of SL to the bioactive form. Strigolactones are hormones that inhibit tillering and shoot branching through the MAX-dependent pathway, contribute to the regulation of shoot architectural response to phosphate-limiting conditions and function as rhizosphere signal that stimulates hyphal branching of arbuscular mycorrhizal fungi and trigger seed germination of root parasitic weeds. Strigolactone-dependent association of D14 with D3 and D53 (a repressor of SL signaling) triggers D53 ubiquitination and degradation. Hydrolyzes the butenolide ring of SLs. A reaction product D-OH is trapped in the cavity of D14, inducing the interaction with SLR1, and probably with other proteins such as D3 and D53. Contributes to the negative regulation of gibberellin signaling. This is Strigolactone esterase D14 from Oryza sativa subsp. japonica (Rice).